Reading from the N-terminus, the 399-residue chain is Enolase (399 aa).

Residue Gln152 participates in (2R)-2-phosphoglycerate binding. Glu194 functions as the Proton donor in the catalytic mechanism. Mg(2+) is bound by residues Asp230, Glu273, and Asp301. (2R)-2-phosphoglycerate is bound by residues Lys326, Arg355, Ser356, and Lys377. The Proton acceptor role is filled by Lys326.

The protein belongs to the enolase family. It depends on Mg(2+) as a cofactor.

It is found in the cytoplasm. The protein localises to the secreted. It localises to the cell surface. The catalysed reaction is (2R)-2-phosphoglycerate = phosphoenolpyruvate + H2O. It functions in the pathway carbohydrate degradation; glycolysis; pyruvate from D-glyceraldehyde 3-phosphate: step 4/5. In terms of biological role, catalyzes the reversible conversion of 2-phosphoglycerate (2-PG) into phosphoenolpyruvate (PEP). It is essential for the degradation of carbohydrates via glycolysis. In Methanocorpusculum labreanum (strain ATCC 43576 / DSM 4855 / Z), this protein is Enolase.